Reading from the N-terminus, the 257-residue chain is Snake venom serine protease serpentokallikrein-2 (257 aa).

An N-terminal signal peptide occupies residues 1–18 (MVLIRVLANLLILQLSYA). Positions 19–24 (QKSSEL) are excised as a propeptide. The Peptidase S1 domain occupies 25-248 (VIGGDECNIN…HLDWIKGIIA (224 aa)). 6 cysteine pairs are disulfide-bonded: C31/C162, C49/C65, C97/C255, C141/C209, C173/C188, and C199/C224. Catalysis depends on H64, which acts as the Charge relay system. Residue N102 is glycosylated (N-linked (GlcNAc...) asparagine). Catalysis depends on D109, which acts as the Charge relay system. S203 acts as the Charge relay system in catalysis.

It belongs to the peptidase S1 family. Snake venom subfamily. As to quaternary structure, monomer. In terms of tissue distribution, expressed by the venom gland.

It localises to the secreted. Snake venom serine protease that may act in the hemostasis system of the prey. The polypeptide is Snake venom serine protease serpentokallikrein-2 (Protobothrops mucrosquamatus (Taiwan habu)).